We begin with the raw amino-acid sequence, 273 residues long: 2,3,4,5-tetrahydropyridine-2,6-dicarboxylate N-succinyltransferase (273 aa).

Residues arginine 104 and aspartate 141 each coordinate substrate.

The protein belongs to the transferase hexapeptide repeat family. As to quaternary structure, homotrimer.

It localises to the cytoplasm. The catalysed reaction is (S)-2,3,4,5-tetrahydrodipicolinate + succinyl-CoA + H2O = (S)-2-succinylamino-6-oxoheptanedioate + CoA. Its pathway is amino-acid biosynthesis; L-lysine biosynthesis via DAP pathway; LL-2,6-diaminopimelate from (S)-tetrahydrodipicolinate (succinylase route): step 1/3. The chain is 2,3,4,5-tetrahydropyridine-2,6-dicarboxylate N-succinyltransferase from Neisseria meningitidis serogroup B (strain ATCC BAA-335 / MC58).